We begin with the raw amino-acid sequence, 397 residues long: Serpin B10 (397 aa).

Residues 74-77 carry the Nuclear localization signal motif; that stretch reads KKRK.

The protein belongs to the serpin family. Ov-serpin subfamily.

The protein resides in the nucleus. Its subcellular location is the cytoplasm. Its function is as follows. Protease inhibitor that may play a role in the regulation of protease activities during hematopoiesis and apoptosis induced by TNF. May regulate protease activities in the cytoplasm and in the nucleus. The polypeptide is Serpin B10 (SERPINB10) (Otolemur garnettii (Small-eared galago)).